Here is a 122-residue protein sequence, read N- to C-terminus: Large ribosomal subunit protein uL14 (122 aa).

It belongs to the universal ribosomal protein uL14 family. In terms of assembly, part of the 50S ribosomal subunit. Forms a cluster with proteins L3 and L19. In the 70S ribosome, L14 and L19 interact and together make contacts with the 16S rRNA in bridges B5 and B8.

In terms of biological role, binds to 23S rRNA. Forms part of two intersubunit bridges in the 70S ribosome. This is Large ribosomal subunit protein uL14 from Borreliella burgdorferi (strain ATCC 35210 / DSM 4680 / CIP 102532 / B31) (Borrelia burgdorferi).